We begin with the raw amino-acid sequence, 172 residues long: 3-hydroxydecanoyl-[acyl-carrier-protein] dehydratase (172 aa).

The active site involves histidine 71.

The protein belongs to the thioester dehydratase family. FabA subfamily. As to quaternary structure, homodimer.

It localises to the cytoplasm. It catalyses the reaction a (3R)-hydroxyacyl-[ACP] = a (2E)-enoyl-[ACP] + H2O. It carries out the reaction (3R)-hydroxydecanoyl-[ACP] = (2E)-decenoyl-[ACP] + H2O. The catalysed reaction is (2E)-decenoyl-[ACP] = (3Z)-decenoyl-[ACP]. The protein operates within lipid metabolism; fatty acid biosynthesis. Its function is as follows. Necessary for the introduction of cis unsaturation into fatty acids. Catalyzes the dehydration of (3R)-3-hydroxydecanoyl-ACP to E-(2)-decenoyl-ACP and then its isomerization to Z-(3)-decenoyl-ACP. Can catalyze the dehydratase reaction for beta-hydroxyacyl-ACPs with saturated chain lengths up to 16:0, being most active on intermediate chain length. The sequence is that of 3-hydroxydecanoyl-[acyl-carrier-protein] dehydratase from Klebsiella pneumoniae subsp. pneumoniae (strain ATCC 700721 / MGH 78578).